The chain runs to 268 residues: Resolvase (268 aa).

Residues 47 to 250 (ELPKYLLAPE…FALDVAARHR (204 aa)) form the Tyr recombinase domain. Active-site residues include arginine 82, lysine 114, histidine 202, arginine 205, and histidine 228. Tyrosine 237 serves as the catalytic O-(3'-phospho-DNA)-tyrosine intermediate.

Belongs to the 'phage' integrase family.

Acts as a repressor of transcription and as a site-specific resolvase that cleaves at the RfsF site. This Escherichia coli (strain K12) protein is Resolvase (resD).